Consider the following 1300-residue polypeptide: ATP-dependent RNA helicase HrpA (1300 aa).

In terms of domain architecture, Helicase ATP-binding spans 87-250 (LEAIRDHQVV…FNNAPIIEVS (164 aa)). Residue 100 to 107 (GETGSGKT) coordinates ATP. Residues 197-200 (DEAH) carry the DEAH box motif. A Helicase C-terminal domain is found at 274–444 (QLQAIFDAVD…SVILQMTALG (171 aa)).

It belongs to the DEAD box helicase family. DEAH subfamily.

It carries out the reaction ATP + H2O = ADP + phosphate + H(+). Its function is as follows. Not yet known. This Escherichia coli (strain K12) protein is ATP-dependent RNA helicase HrpA (hrpA).